We begin with the raw amino-acid sequence, 200 residues long: Dephospho-CoA kinase (200 aa).

Positions 2 to 200 constitute a DPCK domain; it reads LIAVVGKAGV…CHHGHYQTPK (199 aa). Position 10-15 (10-15) interacts with ATP; that stretch reads GVGKTT.

The protein belongs to the CoaE family.

It is found in the cytoplasm. The catalysed reaction is 3'-dephospho-CoA + ATP = ADP + CoA + H(+). The protein operates within cofactor biosynthesis; coenzyme A biosynthesis; CoA from (R)-pantothenate: step 5/5. Its function is as follows. Catalyzes the phosphorylation of the 3'-hydroxyl group of dephosphocoenzyme A to form coenzyme A. This chain is Dephospho-CoA kinase, found in Mycoplasma pneumoniae (strain ATCC 29342 / M129 / Subtype 1) (Mycoplasmoides pneumoniae).